The chain runs to 279 residues: Diaminopimelate epimerase (279 aa).

2 residues coordinate substrate: N11 and N63. The active-site Proton donor is C72. Residues 73-74 (GN), N161, N194, and 212-213 (ER) each bind substrate. Catalysis depends on C221, which acts as the Proton acceptor. Residue 222 to 223 (GT) participates in substrate binding.

Belongs to the diaminopimelate epimerase family. In terms of assembly, homodimer.

It localises to the cytoplasm. It catalyses the reaction (2S,6S)-2,6-diaminopimelate = meso-2,6-diaminopimelate. It functions in the pathway amino-acid biosynthesis; L-lysine biosynthesis via DAP pathway; DL-2,6-diaminopimelate from LL-2,6-diaminopimelate: step 1/1. In terms of biological role, catalyzes the stereoinversion of LL-2,6-diaminopimelate (L,L-DAP) to meso-diaminopimelate (meso-DAP), a precursor of L-lysine and an essential component of the bacterial peptidoglycan. The sequence is that of Diaminopimelate epimerase from Moorella thermoacetica (strain ATCC 39073 / JCM 9320).